We begin with the raw amino-acid sequence, 459 residues long: MKKLWGGRFKKTAEEWVDEFGASIPFDQELVEEDIEGSIAHATMLGKCGILPSEDVEKIKAGLFTLLEKAKQGKLEFSVAYEDIHLNIEKMLIDEIGPVGGKLHTGRSRNDQVATDMHLYLRKRVTEIIALIQELQKVLVEKAEEHVETIVPGYTHLQRAQPISFAHHLLAYFWMLERDRERFRESLKRINKSPLGAGALAGTTFPIDRHLTAELLGFDGIYENSIDAVSDRDFIIEFLSNSSMLMMHLSRFCEELILWSSQEFQFIEIDDAFATGSSIMPQKKNPDMAELIRGKTGRVYGNLLALLTVMKGTPLAYNKDMQEDKEGMFDTVKTVTGSLKIFAGMIKTMKVNVDVMEKATKQDFSNATELADYLANKGVPFREAHEIVGKLVLICIEKGVFLADLPLDVYKEASPLFEEDIYEALKPYTAVNRRNSAGGTGFSEVRKALEKAKKIVNTP.

Belongs to the lyase 1 family. Argininosuccinate lyase subfamily.

The protein resides in the cytoplasm. The catalysed reaction is 2-(N(omega)-L-arginino)succinate = fumarate + L-arginine. It functions in the pathway amino-acid biosynthesis; L-arginine biosynthesis; L-arginine from L-ornithine and carbamoyl phosphate: step 3/3. The chain is Argininosuccinate lyase from Geobacillus sp. (strain WCH70).